The chain runs to 87 residues: MRTLTLIAIVTCAALVIFHAAAAEELEAQDVIQPEDIFTGVATLEEDRIFECSFSCDIKKNGKPCKGAGEKKCSGGWRCKMNFCVKF.

The signal sequence occupies residues 1–23; it reads MRTLTLIAIVTCAALVIFHAAAA. Residues 24–48 constitute a propeptide that is removed on maturation; it reads EELEAQDVIQPEDIFTGVATLEEDR. Cystine bridges form between Cys52-Cys65, Cys56-Cys79, and Cys73-Cys84.

This sequence belongs to the neurotoxin 12 (Hwtx-2) family. 03 (juruin) subfamily. As to expression, expressed by the venom gland.

It localises to the secreted. In terms of biological role, probable ion channel inhibitor. This chain is U3-theraphotoxin-Cg1b, found in Chilobrachys guangxiensis (Chinese earth tiger tarantula).